The following is a 1015-amino-acid chain: SPOC domain-containing protein 1 (1015 aa).

Disordered stretches follow at residues 73 to 97 (MVSPEDPTLSKEGLSAKGPPPSPVL), 118 to 159 (GFSL…EPGG), 213 to 320 (LYPE…PRLE), and 344 to 406 (AASS…MTPL). Basic and acidic residues predominate over residues 304 to 320 (SQDHAEGASKKDFPRLE). The span at 373–382 (AHPTPCQSDP) shows a compositional bias: polar residues. Residues 388-397 (AEPHQQRAED) are compositionally biased toward basic and acidic residues. The TFIIS central domain occupies 410–530 (VRSTVVRAMQ…IIEQQQKELY (121 aa)). A disordered region spans residues 643–685 (IQKAPGPAPASSPEVLKVGETPPKEPQDRLQMPAGLKNAPPSP). One can recognise an SPOC domain in the interval 688–791 (WEGSLDMFSI…VQQVKMVLLP (104 aa)). Disordered stretches follow at residues 858 to 906 (PEDR…PGWG) and 967 to 1015 (QSQD…EHEC). Residues 967 to 978 (QSQDSLPPSTVV) show a composition bias toward polar residues.

Interacts with DNMT3A, DNMT3C and DNMT3L. Interacts with C19orf84 homolog. Interacts with SPIN1; promoting recruitment to transposons marked with histone H3 trimethylated at both 'Lys-4' and 'Lys-9' (H3K4me3K9me3).

It is found in the nucleus. Its subcellular location is the chromosome. Protein adapter that acts as an essential executor of PIWIL4-piRNA pathway directed transposon DNA methylation and silencing in the male embryonic germ cells. Recruited to young transposons, which are specifically marked with histone H3 trimethylated at both 'Lys-4' and 'Lys-9' (H3K4me3K9me3), via its association with SPIN1 chromatin reader, and associates with the de novo DNA methylation machinery and repressive chromatin remodeling complexes. Following this, PIWIL4 engages with nascent transposable element transcript to direct piRNA-directed DNA methylation. Not required for piRNA biosynthesis. The chain is SPOC domain-containing protein 1 from Mus musculus (Mouse).